The sequence spans 94 residues: MKFIRETKDGAVILLYVQPKAKKNEIEGVDEWRGRLKVKIKAPPVEGKANKEVVRFFSKMLGTEVEIIRGGTSREKDLLVKGFSSKEVLKKLGL.

It belongs to the UPF0235 family.

The chain is UPF0235 protein TON_0641 from Thermococcus onnurineus (strain NA1).